Consider the following 302-residue polypeptide: Protein FdhE homolog (302 aa).

The protein belongs to the FdhE family.

The protein resides in the cytoplasm. Functionally, necessary for formate dehydrogenase activity. This is Protein FdhE homolog from Haemophilus influenzae (strain PittGG).